The chain runs to 258 residues: Adenylate kinase (258 aa).

52-57 contacts ATP; the sequence is GAGKGT. An NMP region spans residues 72 to 101; sequence ATGDMLRSQVAKKTALGKEAKKIMDQGGLV. AMP contacts are provided by residues threonine 73, arginine 78, 99 to 101, 128 to 131, and glutamine 135; these read GLV and GFPR. The segment at 169 to 206 is LID; the sequence is GRLVHPASGRSYHKIFNPPKEEMKDDVTGEPLIQRSDD. ATP contacts are provided by residues arginine 170 and 179–180; that span reads SY. 2 residues coordinate AMP: arginine 203 and arginine 214. Glutamine 242 serves as a coordination point for ATP.

It belongs to the adenylate kinase family. AK2 subfamily. In terms of assembly, monomer.

It localises to the cytoplasm. The protein resides in the cytosol. It is found in the mitochondrion intermembrane space. The catalysed reaction is AMP + ATP = 2 ADP. Functionally, catalyzes the reversible transfer of the terminal phosphate group between ATP and AMP. Plays an important role in cellular energy homeostasis and in adenine nucleotide metabolism. Adenylate kinase activity is critical for regulation of the phosphate utilization and the AMP de novo biosynthesis pathways. The chain is Adenylate kinase (adk1) from Aspergillus niger (strain ATCC MYA-4892 / CBS 513.88 / FGSC A1513).